The chain runs to 909 residues: E3 ubiquitin-protein ligase HACE1 (909 aa).

The segment at 1 to 21 is N-terminal helix important for homodimerization; the sequence is MERAMEQLNRLTRSLRRARTV. 7 ANK repeats span residues 23–55, 64–93, 97–126, 130–159, 163–192, 196–226, and 228–253; these read LPDDNETAVYTLMPMVMADQHRSVSELLSNSKF, VKRSLLHIAANCGSVECLVLLLKKGANPNY, SGCTPLHLAARNGQKKCMSKLLEYSADVNI, EGLTAIHWLAVNGRTELLHDLVQHVSDVDV, MGQTALHVACQNGHKTTVQCLLDSGADINR, SGATPLYFACSHGQRDTAQILLLRGAKYLSD, and NGVTPLDLCVQGGYGETCEVLIQYHP. A disordered region spans residues 396 to 433; that stretch reads KGQDQDGTSIPPFEPPGPGSYENLSTGTGESKPDVLGG. The 336-residue stretch at 574–909 folds into the HECT domain; the sequence is NCAKLKQGIA…HCGSYGYTMA (336 aa). The active-site Glycyl thioester intermediate is the Cys-876.

As to quaternary structure, homodimer. The homodimer is autoinhibited and stabilized by its N-terminal helix. Interacts with RAB1 (RAB1A, RAB1B or RAB1C), RAB4 (RAB4A or RAB4B) and RAB11 (RAB11A or RAB11B); in a GTP-dependent manner. Interacts with the 26S proteasomal complex through the 20S core proteasomal subunit. Interacts with RARB. Post-translationally, autoubiquitinated.

It is found in the golgi apparatus. Its subcellular location is the golgi stack membrane. It localises to the cytoplasm. The protein localises to the endoplasmic reticulum. The catalysed reaction is S-ubiquitinyl-[E2 ubiquitin-conjugating enzyme]-L-cysteine + [acceptor protein]-L-lysine = [E2 ubiquitin-conjugating enzyme]-L-cysteine + N(6)-ubiquitinyl-[acceptor protein]-L-lysine.. Its pathway is protein modification; protein ubiquitination. Its function is as follows. E3 ubiquitin-protein ligase involved in Golgi membrane fusion and regulation of small GTPases. Acts as a regulator of Golgi membrane dynamics during the cell cycle: recruited to Golgi membrane by Rab proteins and regulates postmitotic Golgi membrane fusion. Acts by mediating ubiquitination during mitotic Golgi disassembly, ubiquitination serving as a signal for Golgi reassembly later, after cell division. Specifically binds GTP-bound RAC1, mediating ubiquitination and subsequent degradation of active RAC1, thereby playing a role in host defense against pathogens. May also act as a transcription regulator via its interaction with RARB. This is E3 ubiquitin-protein ligase HACE1 (HACE1) from Bos taurus (Bovine).